The sequence spans 884 residues: Protein P (884 aa).

The terminal protein domain (TP) stretch occupies residues 1-184 (MHPFSRLFRN…GKPYSWEHRQ (184 aa)). Positions 185–387 (LVQHNGQQHK…YCIHHIVSSL (203 aa)) are spacer. Positions 299–345 (RNSGHTTWFSSASNSNKSRSREKAYSSNSTSKRYSPPLNYEKSDFSS) are disordered. Positions 388–729 (DDWGPCTVTG…YEELWPVVRQ (342 aa)) are polymerase/reverse transcriptase domain (RT). A Reverse transcriptase domain is found at 398 to 639 (DVTIKSPRTP…NHLHFMGYVI (242 aa)). Residues Asp470, Asp590, and Asp591 each coordinate Mg(2+).

The protein belongs to the hepadnaviridae P protein family.

The catalysed reaction is DNA(n) + a 2'-deoxyribonucleoside 5'-triphosphate = DNA(n+1) + diphosphate. The enzyme catalyses Endonucleolytic cleavage to 5'-phosphomonoester.. Activated by host HSP70 and HSP40 in vitro to be able to bind the epsilon loop of the pgRNA. Because deletion of the RNase H region renders the protein partly chaperone-independent, the chaperones may be needed indirectly to relieve occlusion of the RNA-binding site by this domain. Inhibited by several reverse-transcriptase inhibitors: Lamivudine, Adefovir and Entecavir. Multifunctional enzyme that converts the viral RNA genome into dsDNA in viral cytoplasmic capsids. This enzyme displays a DNA polymerase activity that can copy either DNA or RNA templates, and a ribonuclease H (RNase H) activity that cleaves the RNA strand of RNA-DNA heteroduplexes in a partially processive 3'- to 5'-endonucleasic mode. Neo-synthesized pregenomic RNA (pgRNA) are encapsidated together with the P protein, and reverse-transcribed inside the nucleocapsid. Initiation of reverse-transcription occurs first by binding the epsilon loop on the pgRNA genome, and is initiated by protein priming, thereby the 5'-end of (-)DNA is covalently linked to P protein. Partial (+)DNA is synthesized from the (-)DNA template and generates the relaxed circular DNA (RC-DNA) genome. After budding and infection, the RC-DNA migrates in the nucleus, and is converted into a plasmid-like covalently closed circular DNA (cccDNA). The activity of P protein does not seem to be necessary for cccDNA generation, and is presumably released from (+)DNA by host nuclear DNA repair machinery. The chain is Protein P from Marmota monax (Woodchuck).